The primary structure comprises 51 residues: Insulin-2 (51 aa).

Intrachain disulfides connect Cys8/Cys37, Cys20/Cys50, and Cys36/Cys41.

Belongs to the insulin family. Heterodimer of a B chain and an A chain linked by two disulfide bonds.

It is found in the secreted. Its function is as follows. Insulin decreases blood glucose concentration. It increases cell permeability to monosaccharides, amino acids and fatty acids. It accelerates glycolysis, the pentose phosphate cycle, and glycogen synthesis in liver. This is Insulin-2 from Katsuwonus pelamis (Skipjack tuna).